Consider the following 698-residue polypeptide: Vertnin (698 aa).

Belongs to the vertnin family.

The protein resides in the nucleus. Acts as a transcription factor that regulates development of thoracic vertebrae. This is Vertnin (VRTN) from Sus scrofa (Pig).